A 142-amino-acid polypeptide reads, in one-letter code: Large ribosomal subunit protein uL13 (142 aa).

It belongs to the universal ribosomal protein uL13 family. In terms of assembly, part of the 50S ribosomal subunit.

In terms of biological role, this protein is one of the early assembly proteins of the 50S ribosomal subunit, although it is not seen to bind rRNA by itself. It is important during the early stages of 50S assembly. This is Large ribosomal subunit protein uL13 from Proteus mirabilis (strain HI4320).